The primary structure comprises 650 residues: Macrolide export ATP-binding/permease protein MacB (650 aa).

The 239-residue stretch at 5 to 243 (LELKDIRRSY…AGGTEPVVNT (239 aa)) folds into the ABC transporter domain. Residue 41–48 (GASGSGKS) participates in ATP binding. The next 5 helical transmembrane spans lie at 273-293 (LLTM…VVVG), 523-543 (LFLT…VMNI), 554-574 (ANDI…HLFF), 580-600 (VLPA…AFTL), and 613-633 (PLAL…FGWL).

It belongs to the ABC transporter superfamily. Macrolide exporter (TC 3.A.1.122) family. Homodimer. Part of the tripartite efflux system MacAB-TolC, which is composed of an inner membrane transporter, MacB, a periplasmic membrane fusion protein, MacA, and an outer membrane component, TolC. The complex forms a large protein conduit and can translocate molecules across both the inner and outer membranes. Interacts with MacA.

The protein localises to the cell inner membrane. Functionally, part of the tripartite efflux system MacAB-TolC. MacB is a non-canonical ABC transporter that contains transmembrane domains (TMD), which form a pore in the inner membrane, and an ATP-binding domain (NBD), which is responsible for energy generation. Confers resistance against macrolides. In Shigella dysenteriae serotype 1 (strain Sd197), this protein is Macrolide export ATP-binding/permease protein MacB.